A 445-amino-acid chain; its full sequence is Disintegrin and metalloproteinase domain-containing protein 18 (445 aa).

Residues 1–106 (IYRKHLKYIG…LDMQCLGDLS (106 aa)) form the Peptidase M12B domain. At 1-409 (IYRKHLKYIG…TKRLSQHADS (409 aa)) the chain is on the extracellular side. Cystine bridges form between Cys-18–Cys-101, Cys-60–Cys-85, and Cys-62–Cys-67. N-linked (GlcNAc...) asparagine glycosylation is found at Asn-19 and Asn-59. Asn-84 and Asn-131 each carry an N-linked (GlcNAc...) asparagine glycan. The Disintegrin domain maps to 113-202 (QSVCGNGIVE…HCVPDTFALD (90 aa)). The cysteines at positions 173 and 194 are disulfide-linked. 2 N-linked (GlcNAc...) asparagine glycosylation sites follow: Asn-333 and Asn-340. Positions 342–376 (TGNDCNAAKKCKGNGICNNFGHCQCFPDYRPPDCN) constitute an EGF-like domain. Intrachain disulfides connect Cys-346–Cys-358, Cys-352–Cys-364, and Cys-366–Cys-375. A helical transmembrane segment spans residues 410-430 (WVILGFFIFLPFIMTLFLGII). The Cytoplasmic segment spans residues 431–445 (KRNERKIVPQKEQER).

In terms of processing, the prodomain and the metalloprotease-like domain are cleaved during the epididymal maturation of the spermatozoa. As to expression, expressed specifically in testis.

Its subcellular location is the membrane. Functionally, sperm surface membrane protein that may be involved in spermatogenesis and fertilization. This is a non catalytic metalloprotease-like protein. This is Disintegrin and metalloproteinase domain-containing protein 18 (Adam18) from Rattus norvegicus (Rat).